A 478-amino-acid polypeptide reads, in one-letter code: Lipoprotein lipase (478 aa).

The N-terminal stretch at 1-27 (MESKALLLVALSVWLQSLIVSREGLAT) is a signal peptide. The interval 35–56 (RDFTDIESKFALRTPEDTVEDT) is interaction with GPIHBP1. Residues C57 and C70 are joined by a disulfide bond. The N-linked (GlcNAc...) asparagine glycan is linked to N73. Y124 carries the 3'-nitrotyrosine modification. Residue S162 is the Nucleophile of the active site. The active-site Charge relay system is D186. 3'-nitrotyrosine is present on Y194. A197, R200, S202, and D205 together coordinate Ca(2+). C246 and C269 are oxidised to a cystine. The tract at residues 246 to 269 (CNIGEAIRVIAERGLGDVDQLVKC) is essential for determining substrate specificity. H271 serves as the catalytic Charge relay system. Cystine bridges form between C294/C313 and C305/C308. The 124-residue stretch at 344 to 467 (FHYQVKMRFS…KGKSSVVFVK (124 aa)) folds into the PLAT domain. The residue at position 346 (Y346) is a 3'-nitrotyrosine. N-linked (GlcNAc...) asparagine glycosylation is present at N389. An important for interaction with lipoprotein particles region spans residues 420 to 424 (WSNWW). The tract at residues 433-437 (KIRVK) is important for heparin binding. Residues 446-470 (IFCSREKKSHLQKGKSSVVFVKCHD) form an interaction with GPIHBP1 region. C448 and C468 are joined by a disulfide.

Belongs to the AB hydrolase superfamily. Lipase family. Homodimer. Interacts with GPIHBP1 with 1:1 stoichiometry. Interacts with APOC2; the interaction activates LPL activity in the presence of lipids. Interaction with heparan sulfate proteoglycans is required to protect LPL against loss of activity. Associates with lipoprotein particles in blood plasma. Interacts with LMF1 and SEL1L; interaction with SEL1L is required to prevent aggregation of newly synthesized LPL in the endoplasmic reticulum (ER), and for normal export of LPL from the ER to the extracellular space. Interacts with SORL1; SORL1 acts as a sorting receptor, promoting LPL localization to endosomes and later to lysosomes, leading to degradation of newly synthesized LPL. Post-translationally, tyrosine nitration after lipopolysaccharide (LPS) challenge down-regulates the lipase activity.

The protein resides in the cell membrane. Its subcellular location is the secreted. The protein localises to the extracellular space. It is found in the extracellular matrix. The catalysed reaction is a triacylglycerol + H2O = a diacylglycerol + a fatty acid + H(+). It carries out the reaction a 1,2-diacyl-sn-glycero-3-phosphocholine + H2O = a 2-acyl-sn-glycero-3-phosphocholine + a fatty acid + H(+). It catalyses the reaction 1,2,3-tri-(9Z-octadecenoyl)-glycerol + H2O = di-(9Z)-octadecenoylglycerol + (9Z)-octadecenoate + H(+). The enzyme catalyses 1,2-di-(9Z-octadecenoyl)-sn-glycero-3-phosphocholine + H2O = (9Z-octadecenoyl)-sn-glycero-3-phosphocholine + (9Z)-octadecenoate + H(+). The catalysed reaction is 1,2,3-tributanoylglycerol + H2O = dibutanoylglycerol + butanoate + H(+). It carries out the reaction 1,2-dihexadecanoyl-sn-glycero-3-phosphocholine + H2O = hexadecanoyl-sn-glycero-3-phosphocholine + hexadecanoate + H(+). The apolipoprotein APOC2 acts as a coactivator of LPL activity. Ca(2+) binding promotes protein stability and formation of the active homodimer. Interaction with GPIHBP1 protects LPL against inactivation by ANGPTL4. Its function is as follows. Key enzyme in triglyceride metabolism. Catalyzes the hydrolysis of triglycerides from circulating chylomicrons and very low density lipoproteins (VLDL), and thereby plays an important role in lipid clearance from the blood stream, lipid utilization and storage. Although it has both phospholipase and triglyceride lipase activities it is primarily a triglyceride lipase with low but detectable phospholipase activity. Mediates margination of triglyceride-rich lipoprotein particles in capillaries. Recruited to its site of action on the luminal surface of vascular endothelium by binding to GPIHBP1 and cell surface heparan sulfate proteoglycans. This Sus scrofa (Pig) protein is Lipoprotein lipase (LPL).